A 596-amino-acid chain; its full sequence is MARLGLAVCAASFHLFLLLASTSSLRRAPTEADTANHARRTAYHFQPAKNWQNDPNGPMYHNGMYHLFYQYNPHSALWDIGNLSWGHSVSGDLLNWAALDTALDPTSPFDANGCWSGSATILPGALPAILYTGIDASKEQVQNVAFAKNPSDPLLREWEKPAYNPVIALPADVPGDKFRDPSTAWLGRDGLWRIAVSAEVDGVASTLVYRSKDFVRWERNAAPLHASRAAGMVECPDLFPVAERGEDGLDTSANGAGGVRHVLKLSVMDTLQDYYMVGTYDDAADAFSPAEPERGDDCRSWRRLDYGHLYASKSFFDVRKNRRVLWAWANESDSQADDVARGWSGVQTFPRKMWLAKDGKQLLQWPIEEIETLRRKRAGLWRGTRLGVGAVQEIVGVASSQADVEVVFKIPSLEEAERVDDPNRLLDPQKLCGEKGAAVRGGVGPFGLLVMASGDLHEHTAVFFRVFRHHDKYKLLMCTDLTKSSTRAGVYKPAYGGFVDMDIDDHKTISLRTLIDHSVVESFGGGGRACITARVYPEHVATSSSHLYVFNNGSDAVKVAKLEAWDLATATVNVVVGDHHGLVAPALELEPTRTTQ.

Residues 1–24 form the signal peptide; it reads MARLGLAVCAASFHLFLLLASTSS. Substrate-binding positions include 51 to 54, Gln70, and Trp78; that span reads WQND. The active site involves Asp54. A glycan (N-linked (GlcNAc...) asparagine) is linked at Asn82. Residues 115 to 116, 179 to 180, and Glu234 contribute to the substrate site; these read WS and RD. N-linked (GlcNAc...) asparagine glycosylation is present at Asn330. A disulfide bridge links Cys432 with Cys478. Asn552 carries an N-linked (GlcNAc...) asparagine glycan.

This sequence belongs to the glycosyl hydrolase 32 family.

The protein localises to the secreted. It is found in the extracellular space. Its subcellular location is the apoplast. The protein resides in the cell wall. The catalysed reaction is Hydrolysis of terminal non-reducing beta-D-fructofuranoside residues in beta-D-fructofuranosides.. May play a role in sucrose partitioning during seed development. The sequence is that of Beta-fructofuranosidase, insoluble isoenzyme 7 (CIN7) from Oryza sativa subsp. indica (Rice).